The primary structure comprises 341 residues: Heterogeneous nuclear ribonucleoproteins A2/B1 (341 aa).

RRM domains follow at residues 9 to 92 and 100 to 179; these read RKLF…ESGK and KKLF…LSRQ. Residue Lys10 forms a Glycyl lysine isopeptide (Lys-Gly) (interchain with G-Cter in SUMO2) linkage. Ser17 carries the phosphoserine modification. Arg26 carries the omega-N-methylarginine modification. Ser73 bears the Phosphoserine mark. At Lys92 the chain carries N6,N6-dimethyllysine; alternate. Lys92 participates in a covalent cross-link: Glycyl lysine isopeptide (Lys-Gly) (interchain with G-Cter in SUMO2); alternate. Residues Lys100, Lys108, and Lys125 each participate in a glycyl lysine isopeptide (Lys-Gly) (interchain with G-Cter in SUMO2) cross-link. The residue at position 128 (Thr128) is a Phosphothreonine. Residue Ser137 is modified to Phosphoserine. Residue Lys140 forms a Glycyl lysine isopeptide (Lys-Gly) (interchain with G-Cter in SUMO2) linkage. A Phosphothreonine modification is found at Thr147. Glycyl lysine isopeptide (Lys-Gly) (interchain with G-Cter in SUMO2); alternate cross-links involve residues Lys156 and Lys161. N6-acetyllysine; alternate is present on residues Lys156 and Lys161. A Phosphothreonine modification is found at Thr164. Residue Lys174 forms a Glycyl lysine isopeptide (Lys-Gly) (interchain with G-Cter in SUMO2) linkage. Phosphoserine occurs at positions 177 and 189. The tract at residues 181-341 is disordered; the sequence is MQEVQSSRSG…SGGYGGRSRY (161 aa). Positions 190 to 211 are enriched in gly residues; it reads GRGGNFGFGDSRGGGGNFGPGP. Arg191 bears the Asymmetric dimethylarginine; alternate mark. Arg191 is modified (dimethylated arginine; alternate). Position 191 is an omega-N-methylarginine; alternate (Arg191). Residue Ser200 is modified to Phosphoserine. Arg201 is subject to Asymmetric dimethylarginine; alternate. Arg201 carries the post-translational modification Dimethylated arginine; alternate. Arg201 carries the post-translational modification Omega-N-methylarginine; alternate. A Phosphoserine modification is found at Ser213. Omega-N-methylarginine is present on Arg216. Phosphoserine occurs at positions 219 and 224. Arg226 bears the Omega-N-methylarginine mark. Ser247 bears the Phosphoserine mark. Arg254 bears the Asymmetric dimethylarginine; alternate mark. At Arg254 the chain carries Omega-N-methylarginine; alternate. Residues 296 to 335 are nuclear targeting sequence; that stretch reads QQPSNYGPMKSGNFGGSRNMGGPYGGGNYGPGGSGGSGGY. The span at 308–341 shows a compositional bias: gly residues; sequence NFGGSRNMGGPYGGGNYGPGGSGGSGGYGGRSRY. Phosphoserine is present on Ser312. Residue Arg313 is modified to Omega-N-methylarginine. Tyr319 bears the Phosphotyrosine mark. Phosphoserine occurs at positions 329 and 332. Tyr335 carries the phosphotyrosine modification. At Arg338 the chain carries Omega-N-methylarginine.

Identified in the spliceosome C complex. Identified in a IGF2BP1-dependent mRNP granule complex containing untranslated mRNAs. Interacts with IGF2BP1. Interacts with C9orf72. Interacts with DGCR8. Interacts with TARDBP. Interacts with CKAP5. Interacts with PPIA/CYPA. Interacts (via C-terminus) with FAM76B; the interaction results in retention of HNRNPA2B1 in the nucleus and inhibition of the NF-kappa-B-mediated inflammatory pathway. Interacts with NF-kappa-B inhibitors NFKBIA and NFKBIE; the interaction may be mediated by the RRM2 domain of HNRNPA2B1, and HNRNPA2B1 may interact simultaneously with FAM76B and either NFKBIA or NFKBIE to form a complex. Sumoylated in exosomes, promoting miRNAs-binding. In terms of processing, asymmetric dimethylation at Arg-254 constitutes the major methylation site. According to a report, methylation affects subcellular location and promotes nuclear localization. According to another report, methylation at Arg-254 does not influence nucleocytoplasmic shuttling.

It localises to the nucleus. The protein localises to the nucleoplasm. The protein resides in the cytoplasmic granule. It is found in the secreted. Its subcellular location is the extracellular exosome. In terms of biological role, heterogeneous nuclear ribonucleoprotein (hnRNP) that associates with nascent pre-mRNAs, packaging them into hnRNP particles. The hnRNP particle arrangement on nascent hnRNA is non-random and sequence-dependent and serves to condense and stabilize the transcripts and minimize tangling and knotting. Packaging plays a role in various processes such as transcription, pre-mRNA processing, RNA nuclear export, subcellular location, mRNA translation and stability of mature mRNAs. Forms hnRNP particles with at least 20 other different hnRNP and heterogeneous nuclear RNA in the nucleus. Involved in transport of specific mRNAs to the cytoplasm in oligodendrocytes and neurons: acts by specifically recognizing and binding the A2RE (21 nucleotide hnRNP A2 response element) or the A2RE11 (derivative 11 nucleotide oligonucleotide) sequence motifs present on some mRNAs, and promotes their transport to the cytoplasm. Specifically binds single-stranded telomeric DNA sequences, protecting telomeric DNA repeat against endonuclease digestion. Also binds other RNA molecules, such as primary miRNA (pri-miRNAs): acts as a nuclear 'reader' of the N6-methyladenosine (m6A) mark by specifically recognizing and binding a subset of nuclear m6A-containing pri-miRNAs. Binding to m6A-containing pri-miRNAs promotes pri-miRNA processing by enhancing binding of DGCR8 to pri-miRNA transcripts. Involved in miRNA sorting into exosomes following sumoylation, possibly by binding (m6A)-containing pre-miRNAs. Acts as a regulator of efficiency of mRNA splicing, possibly by binding to m6A-containing pre-mRNAs. Plays a role in the splicing of pyruvate kinase PKM by binding repressively to sequences flanking PKM exon 9, inhibiting exon 9 inclusion and resulting in exon 10 inclusion and production of the PKM M2 isoform. This is Heterogeneous nuclear ribonucleoproteins A2/B1 (HNRNPA2B1) from Bos taurus (Bovine).